The primary structure comprises 502 residues: 9-beta-pimara-7,15-diene oxidase (502 aa).

Transmembrane regions (helical) follow at residues 4–26 and 106–128; these read INSEATVTLVSVVTLPILLALLT and LLVSEIFCYGNLDIGFAPYGAYW. Heme is bound at residue C438.

It belongs to the cytochrome P450 family. The cofactor is heme.

Its subcellular location is the membrane. It carries out the reaction 9beta-pimara-7,15-diene + 3 reduced [NADPH--hemoprotein reductase] + 3 O2 = 9beta-pimara-7,15-dien-19-oate + 3 oxidized [NADPH--hemoprotein reductase] + 4 H2O + 4 H(+). Involved in momilactone phytoalexins biosynthesis; acts as a multifunctional diterpene oxidase. Participates in the biosynthetic steps between 9-beta-pimara-7,15-diene and 3-beta-hydroxy-9-beta-pimara-7,15-dien-19,6-beta-olide. Also catalyzes consecutive oxidations at C19 of syn-stemod-13(17)-ene. In Oryza sativa subsp. japonica (Rice), this protein is 9-beta-pimara-7,15-diene oxidase (CYP99A3).